Here is a 43-residue protein sequence, read N- to C-terminus: Neurotrophin-4 (43 aa).

The protein belongs to the NGF-beta family.

Functionally, NT-4 could play a role in oogenesis and/or early embryogenesis. NT-4 interacts with the low affinity NGF receptor and elicits neurite outgrowth from explanted dorsal root ganglia with no and lower activity in sympathetic and nodose ganglia, respectively. This Macrovipera lebetinus (Levantine viper) protein is Neurotrophin-4 (NTF4).